Reading from the N-terminus, the 33-residue chain is Brevinin-2DYa (33 aa).

A disulfide bridge links C27 with C33.

Expressed by the skin glands.

The protein resides in the secreted. Antimicrobial peptide. This Rana dybowskii (Dybovsky's frog) protein is Brevinin-2DYa.